The following is a 493-amino-acid chain: Galactose-1-phosphate uridylyltransferase (493 aa).

The protein belongs to the galactose-1-phosphate uridylyltransferase type 2 family.

The protein resides in the cytoplasm. The catalysed reaction is alpha-D-galactose 1-phosphate + UDP-alpha-D-glucose = alpha-D-glucose 1-phosphate + UDP-alpha-D-galactose. Its pathway is carbohydrate metabolism; galactose metabolism. The polypeptide is Galactose-1-phosphate uridylyltransferase (Streptococcus pneumoniae (strain Hungary19A-6)).